Consider the following 316-residue polypeptide: Apolipoprotein E (316 aa).

Residues 1 to 18 (MKVLWVALVITLLAGCQA) form the signal peptide. 8 tandem repeats follow at residues 79–100 (VLMD…GQLG), 101–122 (PIAQ…ARLA), 123–144 (SDME…AMMG), 145–166 (QTTD…KRLL), 167–188 (RDAE…EGSE), 189–210 (RSVS…VRAA), 211–232 (TVGT…QKLR), and 233–254 (GRME…EQLE). Residues 79–254 (VLMDETMKEV…HLEEMREQLE (176 aa)) are 8 X 22 AA approximate tandem repeats. Position 142 is a methionine sulfoxide (Met142). The segment at 157–167 (HLRKLRKRLLR) is LDL and other lipoprotein receptors binding. 161-164 (LRKR) contributes to the heparin binding site. The segment at 209–289 (AATVGTLASQ…SWFEPLVEDM (81 aa)) is lipid-binding and lipoprotein association. 228–235 (HQKLRGRM) provides a ligand contact to heparin. The interval 265–316 (SQMRLQAEAFQARLKSWFEPLVEDMQRQWAGLVEKVQLAMATSPTSAPIENS) is homooligomerization. The specificity for association with VLDL stretch occupies residues 277–289 (RLKSWFEPLVEDM).

The protein belongs to the apolipoprotein A1/A4/E family. Homotetramer. May interact with ABCA1; functionally associated with ABCA1 in the biogenesis of HDLs. May interact with APP/A4 amyloid-beta peptide; the interaction is extremely stable in vitro but its physiological significance is unclear. May interact with MAPT. May interact with MAP2. In the cerebrospinal fluid, interacts with secreted SORL1. Interacts with PMEL; this allows the loading of PMEL luminal fragment on ILVs to induce fibril nucleation. Post-translationally, APOE exists as multiple glycosylated and sialylated glycoforms within cells and in plasma. The extent of glycosylation and sialylation are tissue and context specific. Glycated in plasma VLDL. In terms of processing, phosphorylated by FAM20C in the extracellular medium.

It localises to the secreted. Its subcellular location is the extracellular space. The protein resides in the extracellular matrix. It is found in the extracellular vesicle. The protein localises to the endosome. It localises to the multivesicular body. APOE is an apolipoprotein, a protein associating with lipid particles, that mainly functions in lipoprotein-mediated lipid transport between organs via the plasma and interstitial fluids. APOE is a core component of plasma lipoproteins and is involved in their production, conversion and clearance. Apolipoproteins are amphipathic molecules that interact both with lipids of the lipoprotein particle core and the aqueous environment of the plasma. As such, APOE associates with chylomicrons, chylomicron remnants, very low density lipoproteins (VLDL) and intermediate density lipoproteins (IDL) but shows a preferential binding to high-density lipoproteins (HDL). It also binds a wide range of cellular receptors including the LDL receptor/LDLR and the very low-density lipoprotein receptor/VLDLR that mediate the cellular uptake of the APOE-containing lipoprotein particles. Finally, APOE also has a heparin-binding activity and binds heparan-sulfate proteoglycans on the surface of cells, a property that supports the capture and the receptor-mediated uptake of APOE-containing lipoproteins by cells. The protein is Apolipoprotein E (APOE) of Orcinus orca (Killer whale).